We begin with the raw amino-acid sequence, 189 residues long: Xanthine phosphoribosyltransferase (189 aa).

2 residues coordinate xanthine: Leu20 and Asn27. 128-132 (ANGKA) contacts 5-phospho-alpha-D-ribose 1-diphosphate. Lys156 is a binding site for xanthine.

It belongs to the purine/pyrimidine phosphoribosyltransferase family. Xpt subfamily. As to quaternary structure, homodimer.

It is found in the cytoplasm. It carries out the reaction XMP + diphosphate = xanthine + 5-phospho-alpha-D-ribose 1-diphosphate. It functions in the pathway purine metabolism; XMP biosynthesis via salvage pathway; XMP from xanthine: step 1/1. Functionally, converts the preformed base xanthine, a product of nucleic acid breakdown, to xanthosine 5'-monophosphate (XMP), so it can be reused for RNA or DNA synthesis. The polypeptide is Xanthine phosphoribosyltransferase (Pseudomonas syringae pv. syringae (strain B728a)).